A 102-amino-acid polypeptide reads, in one-letter code: UPF0235 protein Noc_3000 (102 aa).

Belongs to the UPF0235 family.

The polypeptide is UPF0235 protein Noc_3000 (Nitrosococcus oceani (strain ATCC 19707 / BCRC 17464 / JCM 30415 / NCIMB 11848 / C-107)).